Consider the following 151-residue polypeptide: Large ribosomal subunit protein uL13 (151 aa).

The disordered stretch occupies residues 126 to 151; the sequence is YPGSNHPHEAQKPEKLTIQTIPGGER. Over residues 131-140 the composition is skewed to basic and acidic residues; the sequence is HPHEAQKPEK.

The protein belongs to the universal ribosomal protein uL13 family. As to quaternary structure, part of the 50S ribosomal subunit.

Functionally, this protein is one of the early assembly proteins of the 50S ribosomal subunit, although it is not seen to bind rRNA by itself. It is important during the early stages of 50S assembly. This is Large ribosomal subunit protein uL13 from Trichodesmium erythraeum (strain IMS101).